The sequence spans 522 residues: Perilipin-1 (522 aa).

At Ser81 the chain carries Phosphoserine. The residue at position 85 (Thr85) is a Phosphothreonine. 5 positions are modified to phosphoserine: Ser126, Ser130, Ser132, Ser137, and Ser174. 2 disordered regions span residues 195–217 (DKEE…AKPS) and 287–318 (LAAA…EENK). Residues 291 to 314 (QEEDHEDQTDTEGEDTEEEEELET) are compositionally biased toward acidic residues. Residues 291-319 (QEEDHEDQTDTEGEDTEEEEELETEENKF) are required for interaction with CIDEC. Phosphothreonine is present on residues Thr299 and Thr301. A phosphoserine mark is found at Ser382, Ser384, and Ser408. The interval 413-522 (ESEFRDIDNP…THYSQLRKKS (110 aa)) is disordered. Residues 414-435 (SEFRDIDNPPAEVERREAERRA) are compositionally biased toward basic and acidic residues. 3 positions are modified to phosphoserine: Ser436, Ser497, and Ser499.

Belongs to the perilipin family. Interacts with ABHD5. Interacts with CIDEC. Interacts with AQP7. Post-translationally, major cAMP-dependent protein kinase-substrate in adipocytes, also dephosphorylated by PP1. When phosphorylated, may be maximally sensitive to HSL and when unphosphorylated, may play a role in the inhibition of lipolysis, by acting as a barrier in lipid droplet. As to expression, detected in adipocytes from white adipose tissue (at protein level). Detected in visceral adipose tissue and mammary gland.

It localises to the endoplasmic reticulum. The protein localises to the lipid droplet. Its function is as follows. Modulator of adipocyte lipid metabolism. Coats lipid storage droplets to protect them from breakdown by hormone-sensitive lipase (HSL). Its absence may result in leanness. Plays a role in unilocular lipid droplet formation by activating CIDEC. Their interaction promotes lipid droplet enlargement and directional net neutral lipid transfer. May modulate lipolysis and triglyceride levels. The sequence is that of Perilipin-1 (PLIN1) from Homo sapiens (Human).